The chain runs to 506 residues: Lysine--tRNA ligase (506 aa).

Residues glutamate 416 and glutamate 423 each contribute to the Mg(2+) site.

The protein belongs to the class-II aminoacyl-tRNA synthetase family. As to quaternary structure, homodimer. The cofactor is Mg(2+).

It localises to the cytoplasm. It catalyses the reaction tRNA(Lys) + L-lysine + ATP = L-lysyl-tRNA(Lys) + AMP + diphosphate. The chain is Lysine--tRNA ligase from Sodalis glossinidius (strain morsitans).